The following is a 573-amino-acid chain: MLSLKLFLVTLFLSLQTLFIASQTLLPSNSSSTICKTTPDPKFCKSVFPQTSQGDVREYGRFSLRKSLTQSRKFTRTIDRYLKRNNALLSQSAVGALQDCRYLASLTTDYLITSFETVNITTSSKTLSFSKADEIQTLLSAALTNEQTCLDGINTAASSSWTIRNGVALPLINDTKLFSVSLALFTKGWVPKKKKQVASYSWAHPKNTHSHTKPFRHFRNGALPLKMTEHTRAVYESLSRRKLADDDNDVNTVLVSDIVTVNQNGTGNFTTITEAVNSAPNKTDGTAGYFVIYVTSGVYEENVVIAKNKRYLMMIGDGINRTVVTGNRNVVDGWTTFNSATFAVTSPNFVAVNMTFRNTAGPEKHQAVAMRSSADLSIFYSCSFEAYQDTLYTHSLRQFYRECDIYGTVDFIFGNAAVVFQDCNLYPRQPMQNQFNAITAQGRTDPNQNTGISIHNCTIKPADDLVSSNYTVKTYLGRPWKEYSRTVFMQSYIDEVVEPVGWREWNGDFALSTLYYAEYNNTGSGSSTTDRVVWPGYHVINSTDANNFTVENFLLGDGWMVQSGVPYISGLLS.

The first 22 residues, 1 to 22, serve as a signal peptide directing secretion; it reads MLSLKLFLVTLFLSLQTLFIAS. The segment at 25-184 is pectinesterase inhibitor 41; it reads LLPSNSSSTI…TKLFSVSLAL (160 aa). N-linked (GlcNAc...) asparagine glycosylation is found at asparagine 29, asparagine 119, asparagine 173, asparagine 264, asparagine 268, asparagine 281, and asparagine 320. The pectinesterase 41 stretch occupies residues 259–557; that stretch reads VTVNQNGTGN…FTVENFLLGD (299 aa). Threonine 336 contacts substrate. N-linked (GlcNAc...) asparagine glycosylation occurs at asparagine 353. Glutamine 366 contacts substrate. Aspartate 389 (proton donor; for pectinesterase activity) is an active-site residue. Cysteine 403 and cysteine 423 are oxidised to a cystine. The active-site Nucleophile; for pectinesterase activity is the aspartate 410. Residues asparagine 456 and asparagine 469 are each glycosylated (N-linked (GlcNAc...) asparagine). Substrate contacts are provided by arginine 478 and tryptophan 480. Residues asparagine 520, asparagine 541, and asparagine 547 are each glycosylated (N-linked (GlcNAc...) asparagine).

The protein in the N-terminal section; belongs to the PMEI family. It in the C-terminal section; belongs to the pectinesterase family. Expressed in flowers, siliques, floral stems and rosettes leaves.

It localises to the secreted. The protein localises to the cell wall. The catalysed reaction is [(1-&gt;4)-alpha-D-galacturonosyl methyl ester](n) + n H2O = [(1-&gt;4)-alpha-D-galacturonosyl](n) + n methanol + n H(+). Its pathway is glycan metabolism; pectin degradation; 2-dehydro-3-deoxy-D-gluconate from pectin: step 1/5. Functionally, acts in the modification of cell walls via demethylesterification of cell wall pectin. The chain is Probable pectinesterase/pectinesterase inhibitor 41 (PME41) from Arabidopsis thaliana (Mouse-ear cress).